The primary structure comprises 206 residues: Imidazoleglycerol-phosphate dehydratase (206 aa).

The tract at residues Met1–Lys24 is disordered.

It belongs to the imidazoleglycerol-phosphate dehydratase family.

The protein resides in the cytoplasm. The enzyme catalyses D-erythro-1-(imidazol-4-yl)glycerol 3-phosphate = 3-(imidazol-4-yl)-2-oxopropyl phosphate + H2O. The protein operates within amino-acid biosynthesis; L-histidine biosynthesis; L-histidine from 5-phospho-alpha-D-ribose 1-diphosphate: step 6/9. This Acidothermus cellulolyticus (strain ATCC 43068 / DSM 8971 / 11B) protein is Imidazoleglycerol-phosphate dehydratase.